We begin with the raw amino-acid sequence, 70 residues long: Protein SlyX homolog (70 aa).

Belongs to the SlyX family.

The protein is Protein SlyX homolog of Shewanella sp. (strain MR-7).